The sequence spans 601 residues: MEFKVIAEYFDKLEKISSRLQLTALLADLLSKSDKTIIDKVVYIIQGKLWPDFLGYPELGIGEKFLIKAISIATNTDENSVENLYKTIGDLGEVARRLKSKQQSTGILGFLGTTSKESLTVDEVYSTLSKVALTTGEGSRDLKIRLLAGLLKKADPLEAKFLVRFVEGRLRVGIGDATVLDAMAIAFGGGQSASEIIERAYNLRADLGNIAKIIVEKGIEALKTLKPQVGIPIRPMLAERLSNPEEILKKMGGNAIVDYKYDGERAQIHKKEDKIFIFSRRLENITSQYPDVVDYVSKYIEGKEFIIEGEIVAIDPESGEMRPFQELMHRKRKSDIYEAIKEYPVNVFLFDLMYYEDVDYTTKPLEARRKLLESIVKPNDYVKIAHHIQANNVEDLKSFFYRAISEGGEGVMVKAIGKDAIYQAGARGWLWIKLKRDYQSEMADTVDLVVVGGFYGKGKRGGKISSLLMAAYNPKTDSFESVCKVASGFSDEQLDELQKKLMEIKRDVKHPRVNSKMEPDIWVEPVYVAEIIGSEITISPLHTCCQDVVEKDAGLSIRFPRFIRWRDDKSPEDATTTDEILEMYNKQPKKKIESPAVDESV.

Asp-258 contacts ATP. Lys-260 functions as the N6-AMP-lysine intermediate in the catalytic mechanism. ATP is bound by residues Arg-265, Arg-280, Glu-310, Phe-350, Arg-427, and Lys-433.

It belongs to the ATP-dependent DNA ligase family. Interacts with the PCNA heterotrimer, probably via subunit PCNA3. Requires a divalent metal cation as cofactor.

It catalyses the reaction ATP + (deoxyribonucleotide)n-3'-hydroxyl + 5'-phospho-(deoxyribonucleotide)m = (deoxyribonucleotide)n+m + AMP + diphosphate.. Its activity is regulated as follows. Ligase activity stimulated by PCNA heterotrimer. Its function is as follows. DNA ligase that seals nicks in double-stranded DNA during DNA replication, DNA recombination and DNA repair. Interaction with PCNA enhances ligase activity. DNA polymerase I, DNA ligase and the flap endonuclease may be constitutively associated with the PCNA heterotrimer forming a scanning complex able to couple DNA synthesis and Okazaki fragment maturation. This chain is DNA ligase, found in Saccharolobus solfataricus (strain ATCC 35092 / DSM 1617 / JCM 11322 / P2) (Sulfolobus solfataricus).